A 406-amino-acid polypeptide reads, in one-letter code: 2,3-bisphosphoglycerate-independent phosphoglycerate mutase (406 aa).

It belongs to the BPG-independent phosphoglycerate mutase family. A-PGAM subfamily.

It carries out the reaction (2R)-2-phosphoglycerate = (2R)-3-phosphoglycerate. The protein operates within carbohydrate degradation; glycolysis; pyruvate from D-glyceraldehyde 3-phosphate: step 3/5. Functionally, catalyzes the interconversion of 2-phosphoglycerate and 3-phosphoglycerate. The sequence is that of 2,3-bisphosphoglycerate-independent phosphoglycerate mutase from Methanococcus maripaludis (strain C6 / ATCC BAA-1332).